The following is a 315-amino-acid chain: Aldo-keto reductase family 4 member C11 (315 aa).

An N-acetylalanine modification is found at alanine 2. NADP(+) is bound by residues 23–24 and aspartate 47; that span reads TW. Tyrosine 52 (proton donor) is an active-site residue. Residues histidine 114, 158–159, glutamine 180, 207–213, 256–258, and 262–266 contribute to the NADP(+) site; these read SN, SPLGSPG, KST, and RIREN. Residue serine 295 is modified to Phosphoserine.

This sequence belongs to the aldo/keto reductase family.

In terms of biological role, oxidoreductase that may act on a broad range of substrates such as ketosteroids, aldehydes, ketones and sugars. This is Aldo-keto reductase family 4 member C11 (AKR4C11) from Arabidopsis thaliana (Mouse-ear cress).